The following is a 418-amino-acid chain: Pyrophosphate--fructose 6-phosphate 1-phosphotransferase (418 aa).

A diphosphate-binding site is contributed by glycine 13. Asparagine 111 contacts Mg(2+). Substrate-binding positions include threonine 139–aspartate 141, methionine 187–arginine 189, glutamate 244, and tyrosine 295–arginine 298. Aspartate 141 (proton acceptor) is an active-site residue.

The protein belongs to the phosphofructokinase type A (PFKA) family. PPi-dependent PFK group II subfamily. Clade 'B2' sub-subfamily. As to quaternary structure, homodimer. Mg(2+) is required as a cofactor.

The protein resides in the cytoplasm. The catalysed reaction is beta-D-fructose 6-phosphate + diphosphate = beta-D-fructose 1,6-bisphosphate + phosphate + H(+). It participates in carbohydrate degradation; glycolysis; D-glyceraldehyde 3-phosphate and glycerone phosphate from D-glucose: step 3/4. With respect to regulation, non-allosteric. Its function is as follows. Catalyzes the phosphorylation of D-fructose 6-phosphate, the first committing step of glycolysis. Uses inorganic phosphate (PPi) as phosphoryl donor instead of ATP like common ATP-dependent phosphofructokinases (ATP-PFKs), which renders the reaction reversible, and can thus function both in glycolysis and gluconeogenesis. Consistently, PPi-PFK can replace the enzymes of both the forward (ATP-PFK) and reverse (fructose-bisphosphatase (FBPase)) reactions. This is Pyrophosphate--fructose 6-phosphate 1-phosphotransferase from Xanthomonas campestris pv. campestris (strain B100).